The chain runs to 258 residues: Probable splicing factor, arginine/serine-rich 3 (258 aa).

The 75-residue stretch at 9-83 (QKVYVGNLPG…RRIRVEFTRG (75 aa)) folds into the RRM 1 domain. 2 disordered regions span residues 81 to 120 (TRGVGPRGPGGRPLQDGGDHRGGDFRGGRGGGRGGGPQRR) and 190 to 258 (AYIR…PSPQ). Residues 97-107 (GGDHRGGDFRG) show a composition bias toward basic and acidic residues. The span at 108–117 (GRGGGRGGGP) shows a compositional bias: gly residues. The RRM 2 domain maps to 123-197 (YRVIVEGLPP…ETAYIRVRED (75 aa)). The span at 208 to 223 (GRDRSRSRSPRAERRA) shows a compositional bias: basic and acidic residues. Positions 228–246 (SPRRSRSRSRSRSRSRSRS) are enriched in basic residues. A compositionally biased stretch (low complexity) spans 247-258 (ASRSPSRSPSPQ).

The protein belongs to the splicing factor SR family. In terms of assembly, interacts with spk-1. Post-translationally, directly phosphorylated by spk-1 in vitro on serine residues of the RS domain. Predominantly coexpressed with spk-1 in adult hermaphrodite germlines.

The protein localises to the nucleus. In terms of biological role, plays an essential role in embryogenesis. This is Probable splicing factor, arginine/serine-rich 3 (rsp-3) from Caenorhabditis elegans.